Here is a 132-residue protein sequence, read N- to C-terminus: Small ribosomal subunit protein uS9 (132 aa).

A disordered region spans residues 100–132; the sequence is LKSNGLLTRDDRTKERKKPGLKRARKAPQYTKR. The span at 114 to 132 shows a compositional bias: basic residues; sequence ERKKPGLKRARKAPQYTKR.

The protein belongs to the universal ribosomal protein uS9 family.

This chain is Small ribosomal subunit protein uS9, found in Dehalococcoides mccartyi (strain ATCC BAA-2266 / KCTC 15142 / 195) (Dehalococcoides ethenogenes (strain 195)).